We begin with the raw amino-acid sequence, 472 residues long: Uronate isomerase (472 aa).

Belongs to the metallo-dependent hydrolases superfamily. Uronate isomerase family.

It catalyses the reaction D-glucuronate = D-fructuronate. The catalysed reaction is aldehydo-D-galacturonate = keto-D-tagaturonate. The protein operates within carbohydrate metabolism; pentose and glucuronate interconversion. The protein is Uronate isomerase of Xanthomonas axonopodis pv. citri (strain 306).